Consider the following 104-residue polypeptide: Type VII secretion system extracellular protein B (104 aa).

This sequence belongs to the WXG100 family. In terms of assembly, homodimer. When mixed with EsxA does not form heterodimers.

The protein localises to the secreted. In terms of biological role, virulence factor that is important for the establishment of infection in the host. EsxB is required for EsxA synthesis as well as secretion. Mediates together with EsxA the release of S.aureus from the host cell. Also inhibits host cytokine production and thus modulates dendritic cell-mediated immunity. The protein is Type VII secretion system extracellular protein B of Staphylococcus aureus (strain Mu50 / ATCC 700699).